The primary structure comprises 178 residues: Caveolin-1 (178 aa).

Ser2 is modified (N-acetylserine). Ser2 bears the Phosphoserine mark. The tract at residues 2 to 94 (SGGKYIDSEG…WKASFTTFTV (93 aa)) is required for homooligomerization. Over 2–104 (SGGKYIDSEG…TKYWFYRLLS (103 aa)) the chain is Cytoplasmic. At Lys5 the chain carries N6-acetyllysine; alternate. Lys5 participates in a covalent cross-link: Glycyl lysine isopeptide (Lys-Gly) (interchain with G-Cter in ubiquitin); alternate. Tyr6 is subject to Phosphotyrosine. Position 9 is a phosphoserine (Ser9). Position 14 is a phosphotyrosine; by ABL1 (Tyr14). The residue at position 25 (Tyr25) is a Phosphotyrosine. Glycyl lysine isopeptide (Lys-Gly) (interchain with G-Cter in ubiquitin) cross-links involve residues Lys26, Lys30, Lys39, Lys47, and Lys57. The segment at 82-94 (DGIWKASFTTFTV) is interaction with CAVIN3. The segment at residues 105–125 (ALFGIPMALIWGIYFAILSFL) is an intramembrane region (helical). Residues 126–178 (HIWAVVPCIRSYLIEIQCISRIYSICIHTFCDPLFEAIGKIFSNVRIALQKEI) lie on the Cytoplasmic side of the membrane. An interacts with SPRY1, SPRY2, SPRY3 and SPRY4 region spans residues 131-142 (VPCIRSYLIEIQ). Residues Cys133, Cys143, and Cys156 are each lipidated (S-palmitoyl cysteine). An interacts with SPRY1, SPRY2, and SPRY4 region spans residues 149–160 (SICIHTFCDPLF). The interval 167 to 178 (FSNVRIALQKEI) is interacts with SPRY1, SPRY2, SPRY3 and SPRY4.

It belongs to the caveolin family. Homooligomer. Interacts with GLIPR2. Interacts with NOSTRIN. Interacts with SNAP25 and STX1A. Interacts (via the N-terminus) with DPP4; the interaction is direct. Interacts with CTNNB1, CDH1 and JUP. Interacts with PACSIN2; this interaction induces membrane tubulation. Interacts with SLC7A9. Interacts with BMX and BTK. Interacts with TGFBR1. Interacts with CAVIN3 (via leucine-zipper domain) in a cholesterol-sensitive manner. Interacts with CAVIN1. Interacts with EHD2 in a cholesterol-dependent manner. Forms a ternary complex with UBXN6 and VCP; mediates CAV1 targeting to lysosomes for degradation. Interacts with ABCG1; this interaction regulates ABCG1-mediated cholesterol efflux. Interacts with NEU3; this interaction enhances NEU3 sialidase activity within caveola. Interacts (via C-terminus) with SPRY1, SPRY2 (via C-terminus), SPRY3, and SPRY4. Interacts with IGFBP5; this interaction allows trafficking of IGFBP5 from the plasma membrane to the nucleus. Phosphorylated at Tyr-14 by ABL1 in response to oxidative stress. In terms of processing, ubiquitinated. Undergo monoubiquitination and multi- and/or polyubiquitination. Monoubiquitination of N-terminal lysines promotes integration in a ternary complex with UBXN6 and VCP which promotes oligomeric CAV1 targeting to lysosomes for degradation. Ubiquitinated by ZNRF1; leading to degradation and modulation of the TLR4-mediated immune response.

It localises to the golgi apparatus membrane. It is found in the cell membrane. The protein resides in the membrane. Its subcellular location is the caveola. The protein localises to the membrane raft. In terms of biological role, may act as a scaffolding protein within caveolar membranes. Forms a stable heterooligomeric complex with CAV2 that targets to lipid rafts and drives caveolae formation. Mediates the recruitment of CAVIN proteins (CAVIN1/2/3/4) to the caveolae. Interacts directly with G-protein alpha subunits and can functionally regulate their activity. Involved in the costimulatory signal essential for T-cell receptor (TCR)-mediated T-cell activation. Its binding to DPP4 induces T-cell proliferation and NF-kappa-B activation in a T-cell receptor/CD3-dependent manner. Recruits CTNNB1 to caveolar membranes and may regulate CTNNB1-mediated signaling through the Wnt pathway. Negatively regulates TGFB1-mediated activation of SMAD2/3 by mediating the internalization of TGFBR1 from membrane rafts leading to its subsequent degradation. Binds 20(S)-hydroxycholesterol (20(S)-OHC). The chain is Caveolin-1 (CAV1) from Didelphis virginiana (North American opossum).